The primary structure comprises 438 residues: GTPase Der (438 aa).

2 consecutive EngA-type G domains span residues 4–168 (PVVA…PAGA) and 176–351 (VRIA…GEYR). GTP is bound by residues 10 to 17 (GRPNVGKS), 57 to 61 (DTGGI), 120 to 123 (NKVD), 182 to 189 (GRPNVGKS), 229 to 233 (DTAGM), and 294 to 297 (NKWD). Residues 352–436 (RQIPTSMLNR…PVRILFRRRE (85 aa)) enclose the KH-like domain.

Belongs to the TRAFAC class TrmE-Era-EngA-EngB-Septin-like GTPase superfamily. EngA (Der) GTPase family. As to quaternary structure, associates with the 50S ribosomal subunit.

In terms of biological role, GTPase that plays an essential role in the late steps of ribosome biogenesis. The chain is GTPase Der from Desulforudis audaxviator (strain MP104C).